The sequence spans 235 residues: High affinity immunoglobulin epsilon receptor subunit beta (235 aa).

A disordered region spans residues 1–23 (MDTENRSRADLALPNPQESSSAP). Over 1 to 51 (MDTENRSRADLALPNPQESSSAPDIELLEASPAKAAPPKQTWRTFLKKELE) the chain is Cytoplasmic. The chain crosses the membrane as a helical span at residues 52–71 (FLGATQILVGLICLCFGTIV). Residues 72-89 (CSVLYVSDFDEEVLLLYK) are Extracellular-facing. A helical transmembrane segment spans residues 90-109 (LGYPFWGAVLFVLSGFLSII). Topologically, residues 110 to 122 (SERKNTLYLVRGS) are cytoplasmic. A helical membrane pass occupies residues 123 to 142 (LGANIVSSIAAGTGIAMLIL). Residues 143–171 (NLTNNFAYMNNCKNVTEDDGCFVASFTTE) lie on the Extracellular side of the membrane. Residues 172–191 (LVLMMLFLTILAFCSAVLFT) traverse the membrane as a helical segment. Residues 192-235 (IYRIGQELESKKVPDDRLYEELNVYSPIYSELEDKGETSSPVDS) are Cytoplasmic-facing. A phosphotyrosine mark is found at Tyr210 and Tyr216. At Ser217 the chain carries Phosphoserine. A Phosphotyrosine modification is found at Tyr220.

It belongs to the MS4A family. As to quaternary structure, tetramer of an alpha chain, a beta chain, and two disulfide linked gamma chains. Binds LILRB1. Interacts with FGR. Interacts with FGR and FES/FPS. Interacts with LYN. Phosphorylated on tyrosine residues by LYN.

It is found in the membrane. Functionally, high affinity receptor that binds to the Fc region of immunoglobulins epsilon. Aggregation of FCER1 by multivalent antigens is required for the full mast cell response, including the release of preformed mediators (such as histamine) by degranulation and de novo production of lipid mediators and cytokines. Also mediates the secretion of important lymphokines. Binding of allergen to receptor-bound IgE leads to cell activation and the release of mediators responsible for the manifestations of allergy. This Mus musculus (Mouse) protein is High affinity immunoglobulin epsilon receptor subunit beta (Ms4a2).